A 207-amino-acid chain; its full sequence is Ras-related protein Rab-8B (207 aa).

Residues S17, G18, V19, G20, K21, T22, C23, T35, S39, and T40 each contribute to the GTP site. T22 is a binding site for Mg(2+). Short sequence motifs (switch) lie at residues 31–45 (DAFNTTFISTIGIDF) and 63–80 (DTAGQERFRTITTAYYRG). Residues T40 and D63 each contribute to the Mg(2+) site. Residue G66 coordinates GTP. T72 is modified (phosphothreonine; by LRRK2). 5 residues coordinate GTP: N121, K122, D124, A152, and K153. S180 and S183 each carry phosphoserine. C204 is modified (cysteine methyl ester). C204 is lipidated: S-geranylgeranyl cysteine. Positions 205–207 (SLL) are cleaved as a propeptide — removed in mature form.

This sequence belongs to the small GTPase superfamily. Rab family. Associated with actin, delta-catenin and alpha and beta tubulins. Interacts with OTOF. Interacts with PEX5R. Interacts with RAB3IP. Interacts with VIM. Interacts with CDH1. Interacts with MICALL2. Interacts with GDI1, GDI2, CHML and CHM; phosphorylation at Thr-72 disrupts these interactions. Interacts with MICAL1. The cofactor is Mg(2+). Phosphorylation of Thr-72 in the switch II region by LRRK2 prevents the association of RAB regulatory proteins, including CHM, CHML and RAB GDP dissociation inhibitors GDI1 and GDI2.

The protein localises to the cell membrane. It localises to the cytoplasmic vesicle. It is found in the phagosome membrane. Its subcellular location is the endosome membrane. The enzyme catalyses GTP + H2O = GDP + phosphate + H(+). With respect to regulation, regulated by guanine nucleotide exchange factors (GEFs) including RAB3IP/RABIN8 which promotes the exchange of bound GDP for free GTP. Regulated by GTPase activating proteins (GAPs) which increase the GTP hydrolysis activity. Inhibited by GDP dissociation inhibitors (GDIs). Functionally, the small GTPases Rab are key regulators of intracellular membrane trafficking, from the formation of transport vesicles to their fusion with membranes. Rabs cycle between an inactive GDP-bound form and an active GTP-bound form that is able to recruit to membranes different sets of downstream effectors directly responsible for vesicle formation, movement, tethering and fusion. RAB8B may be involved in polarized vesicular trafficking and neurotransmitter release. May participate in cell junction dynamics in Sertoli cells. May also participate in the export of a subset of neosynthesized proteins through a Rab8-Rab10-Rab11-dependent endososomal export route. The chain is Ras-related protein Rab-8B from Mus musculus (Mouse).